Consider the following 219-residue polypeptide: Octanoyltransferase (219 aa).

The 176-residue stretch at 32–207 (ADSGDEIWLL…HLVRQLGYAQ (176 aa)) folds into the BPL/LPL catalytic domain. Substrate-binding positions include 71–78 (RGGQVTYH), 138–140 (SLG), and 151–153 (GLA). Catalysis depends on cysteine 169, which acts as the Acyl-thioester intermediate.

The protein belongs to the LipB family.

Its subcellular location is the cytoplasm. The enzyme catalyses octanoyl-[ACP] + L-lysyl-[protein] = N(6)-octanoyl-L-lysyl-[protein] + holo-[ACP] + H(+). The protein operates within protein modification; protein lipoylation via endogenous pathway; protein N(6)-(lipoyl)lysine from octanoyl-[acyl-carrier-protein]: step 1/2. Functionally, catalyzes the transfer of endogenously produced octanoic acid from octanoyl-acyl-carrier-protein onto the lipoyl domains of lipoate-dependent enzymes. Lipoyl-ACP can also act as a substrate although octanoyl-ACP is likely to be the physiological substrate. The sequence is that of Octanoyltransferase from Stutzerimonas stutzeri (strain A1501) (Pseudomonas stutzeri).